The following is a 344-amino-acid chain: Uroporphyrinogen decarboxylase (344 aa).

Substrate is bound by residues 26–30 (RQAGR), Phe45, Asp75, Tyr151, Ser206, and His320.

The protein belongs to the uroporphyrinogen decarboxylase family. Homodimer.

The protein resides in the cytoplasm. It carries out the reaction uroporphyrinogen III + 4 H(+) = coproporphyrinogen III + 4 CO2. It functions in the pathway porphyrin-containing compound metabolism; protoporphyrin-IX biosynthesis; coproporphyrinogen-III from 5-aminolevulinate: step 4/4. Its function is as follows. Catalyzes the decarboxylation of four acetate groups of uroporphyrinogen-III to yield coproporphyrinogen-III. This chain is Uroporphyrinogen decarboxylase, found in Staphylococcus saprophyticus subsp. saprophyticus (strain ATCC 15305 / DSM 20229 / NCIMB 8711 / NCTC 7292 / S-41).